Here is a 219-residue protein sequence, read N- to C-terminus: Small ribosomal subunit protein uS5 (219 aa).

Residues 1-21 (MTDQNQKANQGNGLQTTNLQA) show a composition bias toward polar residues. The tract at residues 1 to 61 (MTDQNQKANQ…NQNRRFQKPA (61 aa)) is disordered. Positions 35-47 (GIKKAVSKKEGGG) are enriched in basic and acidic residues. The region spanning 66–129 (FEERIVKLKR…KAAHNSLHTI (64 aa)) is the S5 DRBM domain.

Belongs to the universal ribosomal protein uS5 family. As to quaternary structure, part of the 30S ribosomal subunit. Contacts proteins S4 and S8.

Functionally, with S4 and S12 plays an important role in translational accuracy. Located at the back of the 30S subunit body where it stabilizes the conformation of the head with respect to the body. In Mycoplasma pneumoniae (strain ATCC 29342 / M129 / Subtype 1) (Mycoplasmoides pneumoniae), this protein is Small ribosomal subunit protein uS5.